The following is a 235-amino-acid chain: Fms-related tyrosine kinase 3 ligand (235 aa).

The first 26 residues, 1-26, serve as a signal peptide directing secretion; sequence MTVLAPAWSPTTYLLLLLLLSSGLSG. Residues 27–184 lie on the Extracellular side of the membrane; sequence TQDCSFQHSP…EATAPTAPQP (158 aa). Cystine bridges form between C30-C111, C70-C153, and C119-C158. 2 N-linked (GlcNAc...) asparagine glycosylation sites follow: N126 and N149. Residues 185–205 traverse the membrane as a helical segment; it reads PLLLLLLLPVGLLLLAAAWCL. Residues 206 to 235 are Cytoplasmic-facing; sequence HWQRTRRRTPRPGEQVPPVPSPQDLLLVEH. A disordered region spans residues 213–235; sequence RTPRPGEQVPPVPSPQDLLLVEH.

As to quaternary structure, homodimer (isoform 2).

The protein localises to the cell membrane. It localises to the secreted. Stimulates the proliferation of early hematopoietic cells by activating FLT3. Synergizes well with a number of other colony stimulating factors and interleukins. Required for the development of B cells, and dendritic cells (DCs). This Homo sapiens (Human) protein is Fms-related tyrosine kinase 3 ligand (FLT3LG).